Here is a 497-residue protein sequence, read N- to C-terminus: FAD-linked oxidoreductase fmqD (497 aa).

The signal sequence occupies residues 1–17 (MQYIPFLISGLVPVALS). One can recognise an FAD-binding PCMH-type domain in the interval 68–243 (NDPSYVATVK…TSATYRIYDQ (176 aa)). N-linked (GlcNAc...) asparagine glycans are attached at residues N99, N261, and N288.

Belongs to the oxygen-dependent FAD-linked oxidoreductase family.

It localises to the secreted. The protein localises to the cell wall. Its pathway is alkaloid biosynthesis. In terms of biological role, FAD-linked oxidoreductase; part of the gene cluster that mediates the biosynthesis of the antitumor fumiquinazolines that confer a dual-usage capability to defend against phagocytes in the environment and animal hosts. The simplest member is fumiquinazoline F (FQF) with a 6-6-6 tricyclic core derived from anthranilic acid (Ant), tryptophan (Trp), and alanine (Ala). The trimodular NRPS fmqA is responsible for FQF formation. Modules 1, 2 and 3 of fmqA are predicted to activate and load Ant, Trp and Ala, respectively, providing for the assembly of an Ant-Trp-Ala-S-enzyme intermediate that would undergo double cyclization for chain release and generation of the tricyclic 6-6-6 product fumiquinazoline F. The presence of an E domain predicted for module 2 of fmqA is consistent with epimerization of L-Trp to D-Trp during assembly to generate the R-stereocenter at C14 of FQF. The FAD-dependent monooxygenase fmqB and the monomodular NRPS fmqC then maturate FQF to FQA. FmqB oxidizes the 2',3'-double bond of the indole side chain of FQF, and fmqC activates L-Ala as the adenylate, installs it as the pantetheinyl thioester on its carrier protein domain, and acylates the oxidized indole for subsequent intramolecular cyclization to create the 6-5-5-imidazolindolone of FQA. The FAD-linked oxidoreductase fmqD introduces a third layer of scaffold complexity by converting FQA to the spirohemiaminal FQC, presumably by catalyzing the formation of a transient imine within the pyrazinone ring. FQC subsequently converts nonenzymatically to the known cyclic aminal FQD. The sequence is that of FAD-linked oxidoreductase fmqD from Aspergillus fumigatus (strain ATCC MYA-4609 / CBS 101355 / FGSC A1100 / Af293) (Neosartorya fumigata).